A 1623-amino-acid polypeptide reads, in one-letter code: ABC transporter C family member 2 (1623 aa).

The next 9 membrane-spanning stretches (helical) occupy residues 37-57 (FVLGISQLVLLVLCLYRIWLA), 76-96 (FLALLAAYATAEPLFRLIMGI), 109-129 (FEAFGLGVKAFAWGAVMVMIL), 145-165 (FAVIYALVGDMVLLNLVLSVK), 172-192 (VLYLYTSEVGAQVLFGILLFM), 336-356 (AWMGYIYAFSIFVGVVFGVLC), 440-460 (VASLIGALLLVLMFPLQTVII), 527-547 (FILNSIPVLVTIVSFGVFTLL), and 557-577 (FTSLSLFAVLRFPLFMLPNII). Residues 302–582 (FWWGGFWKIG…LPNIITQVVN (281 aa)) enclose the ABC transmembrane type-1 1 domain. Residues 614-838 (ISIRNGYFSW…GPLFQRLMEN (225 aa)) form the ABC transporter 1 domain. Residue 649–656 (GSTGEGKT) participates in ATP binding. Residues 842-890 (VEEYSEENGEAEADQTAEQPVANGNTNGLQMDGSDDKKSKEGNKKGGKS) are disordered. Acidic residues predominate over residues 845–856 (YSEENGEAEADQ). Over residues 857 to 870 (TAEQPVANGNTNGL) the composition is skewed to polar residues. The segment covering 875–885 (SDDKKSKEGNK) has biased composition (basic and acidic residues). A run of 6 helical transmembrane segments spans residues 914–934 (ALGGAWVVMMLLLCYVLTEVF), 955–975 (GPLFYNLIYALLSFGQVLVTL), 1032–1054 (AVFVNMFMGQVSQLLSTVVLIGI), 1058–1077 (LSLWAIMPLLVLFYGAYLYY), 1143–1163 (LGIRLETLGGLMIWLTASFAV), and 1177–1197 (STMGLLLSYALNITSLLTGVL). An ABC transmembrane type-1 2 domain is found at 921 to 1205 (VMMLLLCYVL…VLRLASLAEN (285 aa)). An interaction with calmodulin and FKP42/TWD1 region spans residues 1236-1251 (WPSSGSIKFEDVVLRY). An ABC transporter 2 domain is found at 1242–1476 (IKFEDVVLRY…EGSSFSKMVQ (235 aa)). Residue 1276-1283 (GRTGAGKS) coordinates ATP.

The protein belongs to the ABC transporter superfamily. ABCC family. Conjugate transporter (TC 3.A.1.208) subfamily. In terms of assembly, interacts with FKBP42/TWD1 and probably with calmodulin (CaM). As to expression, ubiquitous, at low levels.

The protein localises to the vacuole membrane. It catalyses the reaction ATP + H2O + xenobioticSide 1 = ADP + phosphate + xenobioticSide 2.. Reciprocal promotion of DNP-GS and E(2)17betaG uptake. E(2)17betaG uptake is also stimulated by GSH and S-methyl-glutathione (S-methyl-GS), and, to a lower extent, by GSSG and C3G-GS. Metolachlor-GS and decyl-GS slightly inhibit E(2)17betaG uptake. Pump for glutathione S-conjugates. Mediates the transport of S-conjugates such as GSH, S-(2,4-dinitrophenyl)-glutathione (DNP-GS), GSSG, cyanidin 3-glucoside-GS (C3G-GS) and metolachlor-GS (MOC-GS), glucuronides such as 17-beta-estradiol 17-(beta-D-glucuronide) (E(2)17betaG), and of the chlorophyll catabolite such as B.napus nonfluorescent chlorophyll catabolite (Bn-NCC-1). The chain is ABC transporter C family member 2 (ABCC2) from Arabidopsis thaliana (Mouse-ear cress).